Consider the following 478-residue polypeptide: Centromere DNA-binding protein complex CBF3 subunit C (478 aa).

Residues 206–251 (EVGEEKDVDVSGANSDENSSPSSTIKNKKRSASKRSHSDNGNVGAT) form a disordered region. Over residues 217 to 230 (GANSDENSSPSSTI) the composition is skewed to polar residues. Over residues 231 to 240 (KNKKRSASKR) the composition is skewed to basic residues.

Component of the CBF3 copmplex, which is formed of CBF3A/CBF2, CBF3B/CEP3, CBF3C/CTF13 and CBF3D. CBF3C interacts with CBF3D and SGT1.

It is found in the nucleus. It localises to the chromosome. Its subcellular location is the centromere. Acts as a central component of the centromere DNA-binding protein complex CBF3, which is essential for chromosome segregation and movement of centromeres along microtubules. CBF3 is required for the recruitment of other kinetochore complexes to CEN DNA. It plays a role in the attachment of chromosomes to the spindle and binds selectively to a highly conserved DNA sequence called CDEIII, found in centromers and in several promoters. The association of CBF3C with CBF3D and SGT1 is required for CBF3C activation and CBF3 assembly. This is Centromere DNA-binding protein complex CBF3 subunit C (CTF13) from Saccharomyces cerevisiae (strain ATCC 204508 / S288c) (Baker's yeast).